The primary structure comprises 328 residues: Protein phosphatase 1 regulatory inhibitor subunit PPP1R7 homolog (328 aa).

13 LRR repeats span residues 13–36 (IGDSNNVLDLTSYQLHSLDTVELP), 37–59 (PNLIELDLTANRLSGLDSRIAQL), 61–82 (TLKKLSLRQNLIDDSAVEPLSH), 86–110 (LSDLEELVLRDNKLAKVPDVSIFTK), 111–130 (LLVYDISFNEITSLEGISKA), 131–153 (SSTLKELYVSKNEVNKIMEIEHL), 154–177 (HNLQILELGSNRLRVMENLENFTK), 179–196 (EELWLGRNRIKVVNLCGL), 197–221 (KCIKKISLQSNRLTSMKGFEECVAL), 223–240 (ELYLSHNGISKMEGLSAL), 241–264 (VNLRVLDVSNNKLTSVDDIQNLTK), 266–287 (EDLWLNDNQIESLEAITEAVTG), and 289–312 (KEKLTTIYLENNPCAKSSDYVAAV).

Interacts with human protein phosphatase PPP1C.

Inhibitor of protein-phosphatase 1 (PP1). Binds to and inhibits PP1 activity. In Arabidopsis thaliana (Mouse-ear cress), this protein is Protein phosphatase 1 regulatory inhibitor subunit PPP1R7 homolog.